Reading from the N-terminus, the 161-residue chain is Large ribosomal subunit protein bL17 (161 aa).

The tract at residues 126 to 161 (KVAKKATRTRRSKKTTEAAPAAEVPATEEPKAESAE) is disordered. A compositionally biased stretch (basic residues) spans 129–138 (KKATRTRRSK). Low complexity predominate over residues 142-152 (EAAPAAEVPAT).

It belongs to the bacterial ribosomal protein bL17 family. As to quaternary structure, part of the 50S ribosomal subunit. Contacts protein L32.

The polypeptide is Large ribosomal subunit protein bL17 (Bacteroides fragilis (strain ATCC 25285 / DSM 2151 / CCUG 4856 / JCM 11019 / LMG 10263 / NCTC 9343 / Onslow / VPI 2553 / EN-2)).